A 535-amino-acid chain; its full sequence is High-affinity fructose transporter ght6 (535 aa).

At Met1–Met9 the chain is on the cytoplasmic side. A helical membrane pass occupies residues Leu10–Ile30. At Thr31–Gln58 the chain is on the extracellular side. Residues Gly59–Leu79 traverse the membrane as a helical segment. Topologically, residues Gly80–Lys87 are cytoplasmic. A helical transmembrane segment spans residues Cys88–Pro108. The Extracellular portion of the chain corresponds to Ser109–Gln112. Residues Met113–Gly133 form a helical membrane-spanning segment. The Cytoplasmic segment spans residues Tyr134–Arg144. A helical transmembrane segment spans residues Gly145–Ile165. The Extracellular portion of the chain corresponds to Asn166–Arg181. The helical transmembrane segment at Val182–Pro202 threads the bilayer. Residues Glu203–Thr268 lie on the Cytoplasmic side of the membrane. A helical transmembrane segment spans residues Leu269–Phe287. The Extracellular portion of the chain corresponds to Tyr288–Phe303. The helical transmembrane segment at Leu304–Leu324 threads the bilayer. The Cytoplasmic portion of the chain corresponds to Glu325–Arg330. A helical membrane pass occupies residues Gly331–Gly351. Residues Asp352 to Arg365 are Extracellular-facing. An N-linked (GlcNAc...) asparagine glycan is attached at Asn359. A helical membrane pass occupies residues Ala366–Ala386. The Cytoplasmic portion of the chain corresponds to Pro387–Ala406. Residues Ala407 to Ile427 traverse the membrane as a helical segment. At Ser428–Lys434 the chain is on the extracellular side. Residues Tyr435–Lys455 traverse the membrane as a helical segment. Residues Glu456–Leu535 lie on the Cytoplasmic side of the membrane. Residues Asp484–Glu508 show a composition bias toward basic and acidic residues. Residues Asp484–Leu535 form a disordered region. Positions Ser513–Leu535 are enriched in polar residues.

The protein belongs to the major facilitator superfamily. Sugar transporter (TC 2.A.1.1) family.

The protein resides in the membrane. Functionally, high-affinity fructose transporter. In Schizosaccharomyces pombe (strain 972 / ATCC 24843) (Fission yeast), this protein is High-affinity fructose transporter ght6 (ght6).